A 392-amino-acid chain; its full sequence is Telomere-binding protein subunit beta (392 aa).

The disordered stretch occupies residues Gln234 to Lys392. Over residues Gly247–Ala256 the composition is skewed to basic residues. The segment covering Thr257–Lys268 has biased composition (low complexity). Positions Lys269–Val284 are enriched in basic and acidic residues. Residues Ser328–Met343 show a composition bias toward polar residues. Residues Gly374–Ser384 show a composition bias toward low complexity.

In terms of assembly, heterodimer of an alpha and a beta subunit.

It is found in the nucleus. The protein localises to the chromosome. The protein resides in the telomere. Functionally, may function as protective capping of the single-stranded telomeric overhang. May also participate in telomere length regulation during DNA replication. The protein is Telomere-binding protein subunit beta (STY43) of Stylonychia mytilus (Ciliate).